The chain runs to 572 residues: Capsid vertex component 2 (572 aa).

Residues 1–58 form an interaction with major capsid protein/MCP region; it reads MFRPRFEPMNLPKDSNKPSTLMVLADRLNFISCAEGSSKYASKLFEGTLIDAEIMTNR.

It belongs to the herpesviridae CVC2 protein family. In terms of assembly, heterodimerizes with CVC1. Interacts with major capsid protein/MCP and triplex capsid protein 1/TRX1 at the pentamer vertices. Interacts with the large tegument protein/LTP.

It is found in the virion. The protein localises to the host nucleus. In terms of biological role, capsid vertex-specific component that plays a role during viral DNA encapsidation, assuring correct genome cleavage and presumably stabilizing capsids that contain full-length viral genomes. Participates in the interaction between the capsid and the tegument through interaction with the large tegument protein/LTP. The protein is Capsid vertex component 2 of Infectious laryngotracheitis virus (strain Thorne V882) (ILTV).